Reading from the N-terminus, the 141-residue chain is Hemoglobin subunit alpha (141 aa).

Residues 1 to 141 (VLSGEDKNNI…VSTVLTSKYR (141 aa)) enclose the Globin domain. At Ser3 the chain carries Phosphoserine. Lys7 and Lys11 each carry N6-succinyllysine. Residue Lys16 is modified to N6-acetyllysine; alternate. Residue Lys16 is modified to N6-succinyllysine; alternate. A Phosphotyrosine modification is found at Tyr24. At Lys40 the chain carries N6-succinyllysine. Ser49 is modified (phosphoserine). Residue His58 participates in O2 binding. His87 provides a ligand contact to heme b. Ser102 is modified (phosphoserine). A Phosphothreonine modification is found at Thr108. Residues Ser124 and Ser131 each carry the phosphoserine modification. Thr134 and Thr137 each carry phosphothreonine. A Phosphoserine modification is found at Ser138.

This sequence belongs to the globin family. In terms of assembly, heterotetramer of two alpha chains and two beta chains. As to expression, red blood cells.

Involved in oxygen transport from the lung to the various peripheral tissues. Its function is as follows. Hemopressin acts as an antagonist peptide of the cannabinoid receptor CNR1. Hemopressin-binding efficiently blocks cannabinoid receptor CNR1 and subsequent signaling. The chain is Hemoglobin subunit alpha (HBA) from Ondatra zibethicus (Muskrat).